The chain runs to 428 residues: Serine--tRNA ligase (428 aa).

Position 235–237 (235–237) interacts with L-serine; the sequence is TAE. 266–268 serves as a coordination point for ATP; that stretch reads RSE. Residue Glu-289 coordinates L-serine. 353–356 is a binding site for ATP; that stretch reads EISS. L-serine is bound at residue Ser-389.

Belongs to the class-II aminoacyl-tRNA synthetase family. Type-1 seryl-tRNA synthetase subfamily. In terms of assembly, homodimer. The tRNA molecule binds across the dimer.

It localises to the cytoplasm. It carries out the reaction tRNA(Ser) + L-serine + ATP = L-seryl-tRNA(Ser) + AMP + diphosphate + H(+). It catalyses the reaction tRNA(Sec) + L-serine + ATP = L-seryl-tRNA(Sec) + AMP + diphosphate + H(+). The protein operates within aminoacyl-tRNA biosynthesis; selenocysteinyl-tRNA(Sec) biosynthesis; L-seryl-tRNA(Sec) from L-serine and tRNA(Sec): step 1/1. Catalyzes the attachment of serine to tRNA(Ser). Is also able to aminoacylate tRNA(Sec) with serine, to form the misacylated tRNA L-seryl-tRNA(Sec), which will be further converted into selenocysteinyl-tRNA(Sec). This Shewanella sp. (strain W3-18-1) protein is Serine--tRNA ligase.